Reading from the N-terminus, the 169-residue chain is 6,7-dimethyl-8-ribityllumazine synthase (169 aa).

5-amino-6-(D-ribitylamino)uracil is bound by residues Phe24, 58–60 (ALE), and 82–84 (AVV). Position 87-88 (87-88 (ET)) interacts with (2S)-2-hydroxy-3-oxobutyl phosphate. The active-site Proton donor is His90. A 5-amino-6-(D-ribitylamino)uracil-binding site is contributed by Asn115. Arg129 is a (2S)-2-hydroxy-3-oxobutyl phosphate binding site.

It belongs to the DMRL synthase family.

The catalysed reaction is (2S)-2-hydroxy-3-oxobutyl phosphate + 5-amino-6-(D-ribitylamino)uracil = 6,7-dimethyl-8-(1-D-ribityl)lumazine + phosphate + 2 H2O + H(+). The protein operates within cofactor biosynthesis; riboflavin biosynthesis; riboflavin from 2-hydroxy-3-oxobutyl phosphate and 5-amino-6-(D-ribitylamino)uracil: step 1/2. Catalyzes the formation of 6,7-dimethyl-8-ribityllumazine by condensation of 5-amino-6-(D-ribitylamino)uracil with 3,4-dihydroxy-2-butanone 4-phosphate. This is the penultimate step in the biosynthesis of riboflavin. The chain is 6,7-dimethyl-8-ribityllumazine synthase from Cupriavidus metallidurans (strain ATCC 43123 / DSM 2839 / NBRC 102507 / CH34) (Ralstonia metallidurans).